Here is a 908-residue protein sequence, read N- to C-terminus: Probable disease resistance RPP8-like protein 4 (908 aa).

The stretch at 15-57 forms a coiled coil; sequence DLLSRESERLQGIDEQLDGLKRQLRSLQSLLKDADAKKHGSDR. The NB-ARC domain maps to 146 to 459; sequence RQRVQREIRQ…AEGIYDGSTI (314 aa). An ATP-binding site is contributed by 192–199; the sequence is GMGGIGKT. LRR repeat units lie at residues 575–599, 600–623, and 842–867; these read LTLL…SIGG, LIHL…MRNL, and MPCL…KYIT.

This sequence belongs to the disease resistance NB-LRR family. RPP8/HRT subfamily.

Functionally, potential disease resistance protein. The sequence is that of Probable disease resistance RPP8-like protein 4 (RPP8L4) from Arabidopsis thaliana (Mouse-ear cress).